The chain runs to 634 residues: Chaperone protein DnaK (634 aa).

Position 199 is a phosphothreonine; by autocatalysis (T199). Positions 601–618 (AAAGQAQAESGAGAQGNA) are enriched in low complexity. The disordered stretch occupies residues 601–634 (AAAGQAQAESGAGAQGNAKPDDVVDAEFEEVDKK). Residues 623-634 (VVDAEFEEVDKK) are compositionally biased toward acidic residues.

This sequence belongs to the heat shock protein 70 family.

Its function is as follows. Acts as a chaperone. This is Chaperone protein DnaK from Acidithiobacillus ferrooxidans (strain ATCC 23270 / DSM 14882 / CIP 104768 / NCIMB 8455) (Ferrobacillus ferrooxidans (strain ATCC 23270)).